We begin with the raw amino-acid sequence, 30 residues long: Poly-His-poly-Gly peptide 2 (30 aa).

Residues 1-18 (EDDHDHHHHHHHHHHHHG) are compositionally biased toward basic residues. The interval 1–30 (EDDHDHHHHHHHHHHHHGVGGGGGGGGGGA) is disordered. Residues 19 to 30 (VGGGGGGGGGGA) are compositionally biased toward gly residues.

Expressed by the venom gland.

The protein localises to the secreted. May serve as a metalloproteinase inhibitor during glandular storage. Their inhibition may be instantly disengaged, by dilution or physiochemical change, when venom is injected into tissue of the victim. In Atheris nitschei (Great lakes bush viper), this protein is Poly-His-poly-Gly peptide 2.